Reading from the N-terminus, the 446-residue chain is MKLFGTDGVRGKAGNFLTAELALRLAMAAGVYFRKNSLTNMILVGKDTRRSGYMIETAIVAGLTSVGFNVRQIGPMPTPAVAFLTEDMRCDAGIMISASHNPYYDNGIKFFDRTGFKLDEKEEAEIEKIYFSDKIINEARKQMMEIGTAKRVDDVIGRYIVHIKNSFPRSETLHNLRVVIDTANGASYKVAPTIFKELGAETIVLANEPNGKNINENCGALFPQNLANEVRRLRADVGFAFDGDADRLVVVDENGEIIHGDILLGILASYLKESGELANDKIVATVMSNKALDDFLAKIGISVIRTNVGDKFVLEKMREIGSNFGGEQSGHVIFGSFAKTGDGIVSALQFSACMIKMHKKSSEISKMIKPYPQILRNLKIKNKKPLDKIKGLDEFEKNIQKDGIRTLFRYSGTENLIRLLLEGKNEKLLNKKMDEAEEFFSKALND.

The Phosphoserine intermediate role is filled by S99. The Mg(2+) site is built by S99, D242, D244, and D246. Position 99 is a phosphoserine (S99).

Belongs to the phosphohexose mutase family. Mg(2+) serves as cofactor. Activated by phosphorylation.

The enzyme catalyses alpha-D-glucosamine 1-phosphate = D-glucosamine 6-phosphate. Catalyzes the conversion of glucosamine-6-phosphate to glucosamine-1-phosphate. In Campylobacter hominis (strain ATCC BAA-381 / DSM 21671 / CCUG 45161 / LMG 19568 / NCTC 13146 / CH001A), this protein is Phosphoglucosamine mutase.